A 508-amino-acid chain; its full sequence is Maturase K (508 aa).

Belongs to the intron maturase 2 family. MatK subfamily.

The protein localises to the plastid. Its subcellular location is the chloroplast. Its function is as follows. Usually encoded in the trnK tRNA gene intron. Probably assists in splicing its own and other chloroplast group II introns. This Collinsia heterophylla (Purple Chinese houses) protein is Maturase K.